The primary structure comprises 363 residues: Spermidine/putrescine import ATP-binding protein PotA (363 aa).

Positions 4–234 (LELRNVIRRF…PANRFIADFI (231 aa)) constitute an ABC transporter domain. Residue 36–43 (GPSGCGKT) participates in ATP binding.

Belongs to the ABC transporter superfamily. Spermidine/putrescine importer (TC 3.A.1.11.1) family. As to quaternary structure, the complex is composed of two ATP-binding proteins (PotA), two transmembrane proteins (PotB and PotC) and a solute-binding protein (PotD).

It is found in the cell inner membrane. The catalysed reaction is ATP + H2O + polyamine-[polyamine-binding protein]Side 1 = ADP + phosphate + polyamineSide 2 + [polyamine-binding protein]Side 1.. Part of the ABC transporter complex PotABCD involved in spermidine/putrescine import. Responsible for energy coupling to the transport system. The protein is Spermidine/putrescine import ATP-binding protein PotA of Nitrosomonas eutropha (strain DSM 101675 / C91 / Nm57).